Here is a 213-residue protein sequence, read N- to C-terminus: MSNPSCIIIAITGASASGKSSIASTVHKELCNELGCQEIGIITEDSYYKDQSHLEMTERVKTNYDHPNSMDRDLLIQHLKNLKNGSAVDVPVYSYVEHTRTNETTHFTPKRIVILEGILLLTDERVRQLADISVFVDTPLDICFIRRLQRDMEERGRSLQSVIDQYRATVRPMFLQFIEPSKQYADIVIPRGGKNRIAINMLKAQILHLLNQK.

Residue 13-20 (GASASGKS) coordinates ATP.

This sequence belongs to the uridine kinase family.

Its subcellular location is the cytoplasm. It carries out the reaction uridine + ATP = UMP + ADP + H(+). The catalysed reaction is cytidine + ATP = CMP + ADP + H(+). The protein operates within pyrimidine metabolism; CTP biosynthesis via salvage pathway; CTP from cytidine: step 1/3. It participates in pyrimidine metabolism; UMP biosynthesis via salvage pathway; UMP from uridine: step 1/1. The polypeptide is Uridine kinase (Haemophilus influenzae (strain PittGG)).